A 26-amino-acid polypeptide reads, in one-letter code: GTP-binding protein Rheb (26 aa).

S1, S2, V13, Y16, and T19 together coordinate GTP. Residue S1 coordinates Mg(2+). The Effector region signature appears at 16 to 24; that stretch reads YDPTIENTF. T19 contacts Mg(2+).

It belongs to the small GTPase superfamily. Rheb family.

The enzyme catalyses GTP + H2O = GDP + phosphate + H(+). Binds GTP and exhibits intrinsic GTPase activity. This is GTP-binding protein Rheb from Crocodylus siamensis (Siamese crocodile).